Consider the following 143-residue polypeptide: Nucleoside diphosphate kinase (143 aa).

Residues lysine 11, phenylalanine 59, arginine 87, threonine 93, arginine 104, and asparagine 114 each coordinate ATP. Histidine 117 functions as the Pros-phosphohistidine intermediate in the catalytic mechanism.

This sequence belongs to the NDK family. Homotetramer. Requires Mg(2+) as cofactor.

The protein resides in the cytoplasm. It catalyses the reaction a 2'-deoxyribonucleoside 5'-diphosphate + ATP = a 2'-deoxyribonucleoside 5'-triphosphate + ADP. The enzyme catalyses a ribonucleoside 5'-diphosphate + ATP = a ribonucleoside 5'-triphosphate + ADP. Major role in the synthesis of nucleoside triphosphates other than ATP. The ATP gamma phosphate is transferred to the NDP beta phosphate via a ping-pong mechanism, using a phosphorylated active-site intermediate. This is Nucleoside diphosphate kinase from Clostridium perfringens (strain SM101 / Type A).